Here is a 152-residue protein sequence, read N- to C-terminus: Nucleoside diphosphate kinase (152 aa).

Positions 11, 59, 87, 93, 104, and 114 each coordinate ATP. Catalysis depends on histidine 117, which acts as the Pros-phosphohistidine intermediate.

It belongs to the NDK family. As to quaternary structure, homotetramer. It depends on Mg(2+) as a cofactor.

Its subcellular location is the cytoplasm. The catalysed reaction is a 2'-deoxyribonucleoside 5'-diphosphate + ATP = a 2'-deoxyribonucleoside 5'-triphosphate + ADP. The enzyme catalyses a ribonucleoside 5'-diphosphate + ATP = a ribonucleoside 5'-triphosphate + ADP. In terms of biological role, major role in the synthesis of nucleoside triphosphates other than ATP. The ATP gamma phosphate is transferred to the NDP beta phosphate via a ping-pong mechanism, using a phosphorylated active-site intermediate. In Prochlorococcus marinus (strain AS9601), this protein is Nucleoside diphosphate kinase.